Here is a 60-residue protein sequence, read N- to C-terminus: uncharacterized protein (60 aa).

This is an uncharacterized protein from Saccharomyces cerevisiae (strain ATCC 204508 / S288c) (Baker's yeast).